The chain runs to 391 residues: Paired box protein Pax-5 (391 aa).

Residues 1–21 are disordered; sequence MDLEKNYPTPRTSRTGHGGVN. The segment at residues 16–142 is a DNA-binding region (paired); sequence GHGGVNQLGG…SSINRIIRTK (127 aa). Residues 19 to 75 are PAI subdomain; sequence GVNQLGGVFVNGRPLPDVVRQRIVELAHQGVRPCDISRQLRVSHGCVSKILGRYYET. An RED subdomain region spans residues 94–142; the sequence is KVVEKIAEYKRQNPTMFAWEIRDRLLAERVCDNDTVPSVSSINRIIRTK. The tract at residues 182–218 is disordered; sequence SGILGITSPSADTNKRKRDEGIQESPVPNGHSLPGRD.

In terms of assembly, interacts with ETS1; this interaction alters PAX5 DNA-binding properties. Binds DNA as a monomer. Interacts with TBP; this interaction allows PAX5 to interact with the basal transcription machinery. Interacts with RB1. Interacts with TLE4. Interacts with DAXX. As to quaternary structure, (Microbial infection) Interacts (via N-terminus) with Epstein-Barr virus protein BZLF1 (via C-terminus); this interaction inhibits BZLF1-mediated lytic viral reactivation. Interacts also with EBNA1; this interaction promotes EBNA1-dependent transcription. O-glycosylated. Post-translationally, phosphorylated by SYK. This phosphorylation plays an important role in the abolition of BLIMP1 repression by PAX5 in order to trigger plasma cell differentiation.

It localises to the nucleus. Functionally, transcription factor that plays an essential role in commitment of lymphoid progenitors to the B-lymphocyte lineage. Fulfills a dual role by repressing B-lineage inappropriate genes and simultaneously activating B-lineage-specific genes. In turn, regulates cell adhesion and migration, induces V(H)-to-D(H)J(H) recombination, facilitates pre-B-cell receptor signaling and promotes development to the mature B-cell stage. Repression of the cohesin-release factor WAPL causes global changes of the chromosomal architecture in pro-B cells to facilitate the generation of a diverse antibody repertoire. (Microbial infection) Plays an essential role in the maintenance of Epstein-Barr virus genome copy number within the host cell by promoting EBNA1/oriP-dependent binding and transcription. Also participates in the inhibition of lytic EBV reactivation by modulating viral BZLF1 activity. In Homo sapiens (Human), this protein is Paired box protein Pax-5 (PAX5).